Reading from the N-terminus, the 795-residue chain is Protein translocase subunit SecA 2 (795 aa).

ATP-binding positions include Gln84, 102 to 106, and Asp496; that span reads GEGKT.

It belongs to the SecA family. As to quaternary structure, monomer and homodimer. Part of the essential Sec protein translocation apparatus which comprises SecA, SecYEG and auxiliary proteins SecDF. Other proteins may also be involved.

It localises to the cell membrane. Its subcellular location is the cytoplasm. The enzyme catalyses ATP + H2O + cellular proteinSide 1 = ADP + phosphate + cellular proteinSide 2.. In terms of biological role, part of the Sec protein translocase complex. Interacts with the SecYEG preprotein conducting channel. Has a central role in coupling the hydrolysis of ATP to the transfer of proteins into and across the cell membrane, serving as an ATP-driven molecular motor driving the stepwise translocation of polypeptide chains across the membrane. The polypeptide is Protein translocase subunit SecA 2 (Streptococcus agalactiae serotype III (strain NEM316)).